The following is a 644-amino-acid chain: MTSQSSVISNSCVTMERLSHMMERKAWCSQESALSEEEEDTTRPLETVTFKDVAVDLTQEEWEQMKPAQRNLYRDVMLENYSNLVTVGCQVTKPDVIFKLEQEEEPWVMEEEMFGRHCPEVWEVDEQIKKQQETLVRKVTSISKKILIKEKVIECKKVAKIFPLSSDIVTSRQSFYDCDSLDKGLEHNLDLLRYEKGCVREKQSNEFGKPFYHCASYVVTPFKCNQCGQDFSHKFDLIRHERIHAGEKPYECKECGKAFSRKENLITHQKIHTGEKPYKCNECGKAFIQMSNLIRHHRIHTGEKPYACKDCWKAFSQKSNLIEHERIHTGEKPYECKECGKSFSQKQNLIEHEKIHTGEKPYACNECGRAFSRMSSVTLHMRSHTGEKPYKCNKCGKAFSQCSVFIIHMRSHTGEKPYVCSECGKAFSQSSSLTVHMRNHTAEKPYECKECGKAFSRKENLITHQKIHTGEKPYECSECGKAFIQMSNLIRHQRIHTGEKPYACTVCGKAFSQKSNLTEHEKIHTGEKPYHCNQCGKAFSQRQNLLEHEKIHTGEKPFKCNECGKAFSRISSLTLHVRSHTGEKPYECNKCGKAFSQCSLLIIHMRSHTGEKPFECNECGKAFSQRASLSIHKRGHTGERHQVY.

A KRAB domain is found at 48–119; that stretch reads VTFKDVAVDL…EEEMFGRHCP (72 aa). 15 C2H2-type zinc fingers span residues 222-244, 250-272, 278-300, 306-328, 334-356, 362-384, 390-412, 418-440, 446-468, 474-496, 502-524, 530-552, 558-580, 586-608, and 614-636; these read FKCN…ERIH, YECK…QKIH, YKCN…HRIH, YACK…ERIH, YECK…EKIH, YACN…MRSH, YKCN…MRSH, YVCS…MRNH, YECS…QRIH, YACT…EKIH, YHCN…EKIH, FKCN…VRSH, YECN…MRSH, and FECN…KRGH.

This sequence belongs to the krueppel C2H2-type zinc-finger protein family. Interacts with TRIM28.

It is found in the nucleus. Its function is as follows. Has transcriptional repression activity, partially through the recruitment of the corepressor TRIM28 but also has repression activity independently of this interaction. Essential during embryonic development, where it acts as a direct repressor of a placental-specific transcript of IGF2 in early development and regulates convergent extension movements required for axis elongation and tissue morphogenesis in all germ layers. Also important for normal morphogenesis of extraembryonic tissues including the yolk sac, extraembryonic mesoderm and placenta. May enhance proliferation or maintenance of neural stem cells. The polypeptide is Zinc finger protein 568 (ZNF568) (Homo sapiens (Human)).